We begin with the raw amino-acid sequence, 387 residues long: Sulfopyruvate decarboxylase (387 aa).

It belongs to the TPP enzyme family. Thiamine diphosphate is required as a cofactor.

The catalysed reaction is 3-sulfopyruvate + H(+) = sulfoacetaldehyde + CO2. Its pathway is cofactor biosynthesis; coenzyme M biosynthesis. In terms of biological role, involved in the biosynthesis of the coenzyme M (2-mercaptoethanesulfonic acid). Catalyzes the decarboxylation of sulfopyruvate to sulfoacetaldehyde. Is not able to decarboxylate the analogous compounds 2-oxoglutarate or 2-oxosuberate. This chain is Sulfopyruvate decarboxylase, found in Methanosarcina acetivorans (strain ATCC 35395 / DSM 2834 / JCM 12185 / C2A).